A 366-amino-acid chain; its full sequence is DNA integrity scanning protein DisA (366 aa).

The region spanning 21–159 (VHTLKGTLQR…EGKSHMLEQP (139 aa)) is the DAC domain. ATP-binding positions include Gly88, Leu106, and 119 to 123 (TRHRS).

The protein belongs to the DisA family. In terms of assembly, homooctamer. Requires Mg(2+) as cofactor.

It catalyses the reaction 2 ATP = 3',3'-c-di-AMP + 2 diphosphate. Its function is as follows. Participates in a DNA-damage check-point. DisA forms globular foci that rapidly scan along the chromosomes searching for lesions. In terms of biological role, also has diadenylate cyclase activity, catalyzing the condensation of 2 ATP molecules into cyclic di-AMP (c-di-AMP). c-di-AMP likely acts as a signaling molecule that may couple DNA integrity with a cellular process. This is DNA integrity scanning protein DisA from Corynebacterium glutamicum (strain ATCC 13032 / DSM 20300 / JCM 1318 / BCRC 11384 / CCUG 27702 / LMG 3730 / NBRC 12168 / NCIMB 10025 / NRRL B-2784 / 534).